Here is a 233-residue protein sequence, read N- to C-terminus: Protein Atu3128 (233 aa).

It belongs to the glycosyl hydrolase 88 family.

Its function is as follows. Seems to regulate the surface properties of the bacterium in the presence of plant cells or plant cell extracts. Mutations in this protein are responsible for an increased aggregation of the bacteria in the presence of pea root cap cells. This is Protein Atu3128 from Agrobacterium fabrum (strain C58 / ATCC 33970) (Agrobacterium tumefaciens (strain C58)).